Consider the following 464-residue polypeptide: Cysteine--tRNA ligase (464 aa).

Residue Cys29 participates in Zn(2+) binding. The short motif at 31–41 (ATVQGDPHIGH) is the 'HIGH' region element. Zn(2+) is bound by residues Cys207, His232, and Glu236. Residues 263-267 (KMSKS) carry the 'KMSKS' region motif. Position 266 (Lys266) interacts with ATP.

The protein belongs to the class-I aminoacyl-tRNA synthetase family. In terms of assembly, monomer. Zn(2+) is required as a cofactor.

It is found in the cytoplasm. It carries out the reaction tRNA(Cys) + L-cysteine + ATP = L-cysteinyl-tRNA(Cys) + AMP + diphosphate. The polypeptide is Cysteine--tRNA ligase (Rhodococcus opacus (strain B4)).